The chain runs to 232 residues: Ribonuclease 3 (232 aa).

Residues 10–135 (ALKIYEATGY…LIGAMYMDGG (126 aa)) form the RNase III domain. Residue glutamate 48 participates in Mg(2+) binding. Aspartate 52 is an active-site residue. The Mg(2+) site is built by asparagine 121 and glutamate 124. The active site involves glutamate 124. The region spanning 161–230 (DPKTALQEWV…AKLMLKKITE (70 aa)) is the DRBM domain.

This sequence belongs to the ribonuclease III family. As to quaternary structure, homodimer. Mg(2+) is required as a cofactor.

Its subcellular location is the cytoplasm. It catalyses the reaction Endonucleolytic cleavage to 5'-phosphomonoester.. Its function is as follows. Digests double-stranded RNA. Involved in the processing of primary rRNA transcript to yield the immediate precursors to the large and small rRNAs (23S and 16S). Processes some mRNAs, and tRNAs when they are encoded in the rRNA operon. Processes pre-crRNA and tracrRNA of type II CRISPR loci if present in the organism. In Anaplasma marginale (strain St. Maries), this protein is Ribonuclease 3.